Consider the following 123-residue polypeptide: UPF0102 protein APJL_1381 (123 aa).

The protein belongs to the UPF0102 family.

The protein is UPF0102 protein APJL_1381 of Actinobacillus pleuropneumoniae serotype 3 (strain JL03).